We begin with the raw amino-acid sequence, 334 residues long: Holliday junction branch migration complex subunit RuvB (334 aa).

Residues 4–184 form a large ATPase domain (RuvB-L) region; the sequence is ADRLIQPQIQ…FGIPLRLEFY (181 aa). Residues Arg-24, Gly-65, Lys-68, Thr-69, Thr-70, 131–133, Arg-174, Tyr-184, and Arg-221 each bind ATP; that span reads EDY. A Mg(2+)-binding site is contributed by Thr-69. The segment at 185 to 255 is small ATPAse domain (RuvB-S); that stretch reads NIKDLSTIVT…VAEHALDLLD (71 aa). The tract at residues 258 to 334 is head domain (RuvB-H); it reads SEGFDYMDRK…YQHFELIKPE (77 aa). Residues Arg-294, Arg-313, and Arg-318 each contribute to the DNA site.

It belongs to the RuvB family. As to quaternary structure, homohexamer. Forms an RuvA(8)-RuvB(12)-Holliday junction (HJ) complex. HJ DNA is sandwiched between 2 RuvA tetramers; dsDNA enters through RuvA and exits via RuvB. An RuvB hexamer assembles on each DNA strand where it exits the tetramer. Each RuvB hexamer is contacted by two RuvA subunits (via domain III) on 2 adjacent RuvB subunits; this complex drives branch migration. In the full resolvosome a probable DNA-RuvA(4)-RuvB(12)-RuvC(2) complex forms which resolves the HJ.

Its subcellular location is the cytoplasm. The enzyme catalyses ATP + H2O = ADP + phosphate + H(+). Its function is as follows. The RuvA-RuvB-RuvC complex processes Holliday junction (HJ) DNA during genetic recombination and DNA repair, while the RuvA-RuvB complex plays an important role in the rescue of blocked DNA replication forks via replication fork reversal (RFR). RuvA specifically binds to HJ cruciform DNA, conferring on it an open structure. The RuvB hexamer acts as an ATP-dependent pump, pulling dsDNA into and through the RuvAB complex. RuvB forms 2 homohexamers on either side of HJ DNA bound by 1 or 2 RuvA tetramers; 4 subunits per hexamer contact DNA at a time. Coordinated motions by a converter formed by DNA-disengaged RuvB subunits stimulates ATP hydrolysis and nucleotide exchange. Immobilization of the converter enables RuvB to convert the ATP-contained energy into a lever motion, pulling 2 nucleotides of DNA out of the RuvA tetramer per ATP hydrolyzed, thus driving DNA branch migration. The RuvB motors rotate together with the DNA substrate, which together with the progressing nucleotide cycle form the mechanistic basis for DNA recombination by continuous HJ branch migration. Branch migration allows RuvC to scan DNA until it finds its consensus sequence, where it cleaves and resolves cruciform DNA. In Shewanella baltica (strain OS155 / ATCC BAA-1091), this protein is Holliday junction branch migration complex subunit RuvB.